A 146-amino-acid chain; its full sequence is UPF0178 protein BC_3040 (146 aa).

The protein belongs to the UPF0178 family.

The chain is UPF0178 protein BC_3040 from Bacillus cereus (strain ATCC 14579 / DSM 31 / CCUG 7414 / JCM 2152 / NBRC 15305 / NCIMB 9373 / NCTC 2599 / NRRL B-3711).